Here is a 114-residue protein sequence, read N- to C-terminus: Putative toxin HigB3 (114 aa).

It belongs to the mycobacterial HigB family.

Its function is as follows. Putative toxic component of a type II toxin-antitoxin (TA) system. Its cognate antitoxin would be HigA3. Not toxic upon expression in M.smegmatis. The polypeptide is Putative toxin HigB3 (Mycobacterium tuberculosis (strain ATCC 25618 / H37Rv)).